Consider the following 292-residue polypeptide: Bifunctional protein FolD 2 (292 aa).

Residues 166-168 (GHS) and I232 contribute to the NADP(+) site.

Belongs to the tetrahydrofolate dehydrogenase/cyclohydrolase family. Homodimer.

The enzyme catalyses (6R)-5,10-methylene-5,6,7,8-tetrahydrofolate + NADP(+) = (6R)-5,10-methenyltetrahydrofolate + NADPH. It carries out the reaction (6R)-5,10-methenyltetrahydrofolate + H2O = (6R)-10-formyltetrahydrofolate + H(+). Its pathway is one-carbon metabolism; tetrahydrofolate interconversion. In terms of biological role, catalyzes the oxidation of 5,10-methylenetetrahydrofolate to 5,10-methenyltetrahydrofolate and then the hydrolysis of 5,10-methenyltetrahydrofolate to 10-formyltetrahydrofolate. This Ruegeria pomeroyi (strain ATCC 700808 / DSM 15171 / DSS-3) (Silicibacter pomeroyi) protein is Bifunctional protein FolD 2.